Reading from the N-terminus, the 156-residue chain is Small ribosomal subunit protein uS7 (156 aa).

This sequence belongs to the universal ribosomal protein uS7 family. Part of the 30S ribosomal subunit. Contacts proteins S9 and S11.

Its function is as follows. One of the primary rRNA binding proteins, it binds directly to 16S rRNA where it nucleates assembly of the head domain of the 30S subunit. Is located at the subunit interface close to the decoding center, probably blocks exit of the E-site tRNA. The chain is Small ribosomal subunit protein uS7 from Pelagibacter ubique (strain HTCC1062).